Reading from the N-terminus, the 345-residue chain is Nicotinate-nucleotide--dimethylbenzimidazole phosphoribosyltransferase (345 aa).

Residue Glu312 is the Proton acceptor of the active site.

This sequence belongs to the CobT family.

It carries out the reaction 5,6-dimethylbenzimidazole + nicotinate beta-D-ribonucleotide = alpha-ribazole 5'-phosphate + nicotinate + H(+). It functions in the pathway nucleoside biosynthesis; alpha-ribazole biosynthesis; alpha-ribazole from 5,6-dimethylbenzimidazole: step 1/2. In terms of biological role, catalyzes the synthesis of alpha-ribazole-5'-phosphate from nicotinate mononucleotide (NAMN) and 5,6-dimethylbenzimidazole (DMB). The protein is Nicotinate-nucleotide--dimethylbenzimidazole phosphoribosyltransferase of Bacteroides fragilis (strain ATCC 25285 / DSM 2151 / CCUG 4856 / JCM 11019 / LMG 10263 / NCTC 9343 / Onslow / VPI 2553 / EN-2).